A 256-amino-acid chain; its full sequence is Hemin import ATP-binding protein HmuV (256 aa).

The ABC transporter domain maps to isoleucine 2–aspartate 238. Glycine 34 to serine 41 lines the ATP pocket.

This sequence belongs to the ABC transporter superfamily. Heme (hemin) importer (TC 3.A.1.14.5) family. The complex is composed of two ATP-binding proteins (HmuV), two transmembrane proteins (HmuU) and a solute-binding protein (HmuT).

Its subcellular location is the cell inner membrane. Part of the ABC transporter complex HmuTUV involved in hemin import. Responsible for energy coupling to the transport system. This is Hemin import ATP-binding protein HmuV from Escherichia coli O6:K15:H31 (strain 536 / UPEC).